Here is a 332-residue protein sequence, read N- to C-terminus: Phosphoenolpyruvate transferase (332 aa).

Residue aspartate 63 coordinates 7,8-didemethyl-8-hydroxy-5-deazariboflavin.

The protein belongs to the CofD family. As to quaternary structure, homodimer. Mg(2+) serves as cofactor.

The enzyme catalyses enolpyruvoyl-2-diphospho-5'-guanosine + 7,8-didemethyl-8-hydroxy-5-deazariboflavin = dehydro coenzyme F420-0 + GMP + H(+). It functions in the pathway cofactor biosynthesis; coenzyme F420 biosynthesis. Functionally, catalyzes the transfer of the phosphoenolpyruvate moiety from enoylpyruvoyl-2-diphospho-5'-guanosine (EPPG) to 7,8-didemethyl-8-hydroxy-5-deazariboflavin (FO) with the formation of dehydro coenzyme F420-0 and GMP. The polypeptide is Phosphoenolpyruvate transferase (Nocardia farcinica (strain IFM 10152)).